We begin with the raw amino-acid sequence, 712 residues long: Auxin response factor 15 (712 aa).

The segment at residues 142-244 (FCKTLTASDT…ELRLGVRRAA (103 aa)) is a DNA-binding region (TF-B3).

It belongs to the ARF family. In terms of assembly, homo and heterodimers. Expressed in roots, culms, leaves and young panicles.

The protein localises to the nucleus. Auxin response factors (ARFs) are transcriptional factors that bind specifically to the DNA sequence 5'-TGTCTC-3' found in the auxin-responsive promoter elements (AuxREs). The chain is Auxin response factor 15 (ARF15) from Oryza sativa subsp. japonica (Rice).